The primary structure comprises 296 residues: UPF0761 membrane protein YE0031 (296 aa).

The next 7 membrane-spanning stretches (helical) occupy residues 44–64 (LLSLVPLVTVIFALFAAFPMF), 67–87 (ISIKLKAFIFTNFMPATGDII), 108–128 (GLIVTALLLIYSVDSVLNIIW), 136–156 (LVFSFAVYWMVLTLGPILVGA), 185–205 (LFPLLISWVSFWLLYSVVPTV), 212–232 (ALIGALVAALFFELGKKGFTM), and 246–266 (VLAVIPILFLWVYWSWCIVLL).

This sequence belongs to the UPF0761 family.

Its subcellular location is the cell inner membrane. This Yersinia enterocolitica serotype O:8 / biotype 1B (strain NCTC 13174 / 8081) protein is UPF0761 membrane protein YE0031.